The primary structure comprises 367 residues: MPEQHHSNFFDNEIELSSKKSLDFDFSEIAENIIKTITNTVITTYQTFKTETINLFNGTTFKKIFFSSDENRAKIDSNSEATISLSEHIEQLKRVIESSKVYLRAIIERIRYQGKIKIVNKLNNNPRHPEYQSSFPEITNPIPEPEDENDFYPFKRLDENFDLEGRKSILKMDQNFRQRMNKNIQESYANDFIDESTWTVSDQLNSFNNIQSTIKHFQKKYEFLKSSNDLDNDFMNDTNPFLFVVNNALISVNNRNKMLKDFKTIVPNVEFRQLISTYANQKFLRQSYLQLISEHPEIDQYQIKHSRNIYKINFLDDGSVKLVATNLSDLDVKNDNYIQKYKSFGIRATIILPPNASPIMKYSYFMK.

This is an uncharacterized protein from Buchnera aphidicola subsp. Acyrthosiphon pisum (strain APS) (Acyrthosiphon pisum symbiotic bacterium).